The chain runs to 209 residues: Imidazole glycerol phosphate synthase subunit HisH (209 aa).

Positions M1–S205 constitute a Glutamine amidotransferase type-1 domain. The active-site Nucleophile is C79. Catalysis depends on residues H180 and E182.

Heterodimer of HisH and HisF.

It localises to the cytoplasm. The enzyme catalyses 5-[(5-phospho-1-deoxy-D-ribulos-1-ylimino)methylamino]-1-(5-phospho-beta-D-ribosyl)imidazole-4-carboxamide + L-glutamine = D-erythro-1-(imidazol-4-yl)glycerol 3-phosphate + 5-amino-1-(5-phospho-beta-D-ribosyl)imidazole-4-carboxamide + L-glutamate + H(+). The catalysed reaction is L-glutamine + H2O = L-glutamate + NH4(+). It participates in amino-acid biosynthesis; L-histidine biosynthesis; L-histidine from 5-phospho-alpha-D-ribose 1-diphosphate: step 5/9. Its function is as follows. IGPS catalyzes the conversion of PRFAR and glutamine to IGP, AICAR and glutamate. The HisH subunit catalyzes the hydrolysis of glutamine to glutamate and ammonia as part of the synthesis of IGP and AICAR. The resulting ammonia molecule is channeled to the active site of HisF. This Bacillus thuringiensis subsp. konkukian (strain 97-27) protein is Imidazole glycerol phosphate synthase subunit HisH.